We begin with the raw amino-acid sequence, 266 residues long: Imidazole glycerol phosphate synthase subunit HisF (266 aa).

Residues Asp-11 and Asp-130 contribute to the active site.

This sequence belongs to the HisA/HisF family. In terms of assembly, heterodimer of HisH and HisF.

It is found in the cytoplasm. It catalyses the reaction 5-[(5-phospho-1-deoxy-D-ribulos-1-ylimino)methylamino]-1-(5-phospho-beta-D-ribosyl)imidazole-4-carboxamide + L-glutamine = D-erythro-1-(imidazol-4-yl)glycerol 3-phosphate + 5-amino-1-(5-phospho-beta-D-ribosyl)imidazole-4-carboxamide + L-glutamate + H(+). Its pathway is amino-acid biosynthesis; L-histidine biosynthesis; L-histidine from 5-phospho-alpha-D-ribose 1-diphosphate: step 5/9. Its function is as follows. IGPS catalyzes the conversion of PRFAR and glutamine to IGP, AICAR and glutamate. The HisF subunit catalyzes the cyclization activity that produces IGP and AICAR from PRFAR using the ammonia provided by the HisH subunit. This is Imidazole glycerol phosphate synthase subunit HisF from Albidiferax ferrireducens (strain ATCC BAA-621 / DSM 15236 / T118) (Rhodoferax ferrireducens).